Consider the following 439-residue polypeptide: Acetyl esterase Axe7A (439 aa).

Positions 1–31 are cleaved as a signal peptide; sequence MFNFAPKQTTEMKKLLFTLVFVLGSMATALA. Residue Ser309 is the Nucleophile of the active site. Residues Asp391 and His420 each act as charge relay system in the active site.

It belongs to the carbohydrate esterase 7 family.

The protein operates within glycan degradation; xylan degradation. Its function is as follows. Involved in degradation of plant cell wall polysaccharides. Has acetyl esterase activity towards a broad range of substrates including xylose-tetraacetate, 4-O-methylumbelliferyl acetate, glucose-pentaacetate, cephalosporin C, and acetylated xylo-oligosaccharides smaller than xylo-heptaose. Displays no detectable activity on polymeric acetylated xylan. The polypeptide is Acetyl esterase Axe7A (Xylanibacter ruminicola (strain ATCC 19189 / DSM 19721 / CIP 105475 / JCM 8958 / 23) (Prevotella ruminicola)).